Consider the following 322-residue polypeptide: Secreted RxLR effector protein RXLR-C17 (322 aa).

The signal sequence occupies residues 1 to 25; sequence MREPAFSFRLHLFAAMILLVDVFSA. The RxLR-dEER signature appears at 43–62; it reads RQLRARDSQAKNYVIRDEER. Asn-73 carries an N-linked (GlcNAc...) asparagine glycan.

The protein belongs to the RxLR effector family.

The protein resides in the secreted. It localises to the host cytoplasm. It is found in the host nucleus. Functionally, secreted effector that suppresses pattern-triggered immunity (PTI) in plant host. In Plasmopara halstedii (Downy mildew of sunflower), this protein is Secreted RxLR effector protein RXLR-C17.